Reading from the N-terminus, the 218-residue chain is Ribose-5-phosphate isomerase A (218 aa).

Substrate contacts are provided by residues 28 to 31 (TGST), 81 to 84 (DGAD), and 94 to 97 (KGGG). E103 acts as the Proton acceptor in catalysis. K121 contacts substrate.

It belongs to the ribose 5-phosphate isomerase family. In terms of assembly, homodimer.

The catalysed reaction is aldehydo-D-ribose 5-phosphate = D-ribulose 5-phosphate. It participates in carbohydrate degradation; pentose phosphate pathway; D-ribose 5-phosphate from D-ribulose 5-phosphate (non-oxidative stage): step 1/1. Catalyzes the reversible conversion of ribose-5-phosphate to ribulose 5-phosphate. This is Ribose-5-phosphate isomerase A from Proteus mirabilis (strain HI4320).